A 364-amino-acid chain; its full sequence is DNA replication and repair protein RecF (364 aa).

30–37 (GKNAQGKT) contributes to the ATP binding site.

This sequence belongs to the RecF family.

Its subcellular location is the cytoplasm. Functionally, the RecF protein is involved in DNA metabolism; it is required for DNA replication and normal SOS inducibility. RecF binds preferentially to single-stranded, linear DNA. It also seems to bind ATP. This chain is DNA replication and repair protein RecF, found in Geotalea uraniireducens (strain Rf4) (Geobacter uraniireducens).